The primary structure comprises 702 residues: MNSLFASTARGLEELLKTELENLGAVECQVVQGGVHFKGDTRLVYQSLMWSRLASRIMLPLGECKVYSDLDLYLGVQAINWTEMFTPGATFAVHFSGLNDTIRNSQYGAMKVKDAIVDAFTRKNLPRPNVDRDAPDIRVNVWLHKETASIALDLSGDGLHLRGYRDRAGIAPIKETLAAAIVMRSGWQPGTPLLDPMCGSGTLLIEAAMLATDRAPGLHRGRWGFSGWAQHDEAIWQEVKAEAQTRSRKGLAEYSSHFYGSDSDARVIQRARTNARLAGIGELITFEVKDVAQLTNPLPKGPYGTVLSNPPYGERLDSEPALIALHSLLGRIMKNQFGGWNLSLFSASPDLLSCLQLRADKQYKAKNGPLDCVQKNYHVAESTPDSKPAMVAEDYANRLRKNLKKFEKWARQDGIECYRLYDADLPEYNVAVDRYADWVVVQEYAPPKTIDAHKARQRLFDIIAATISVLGIAPNKLVLKTRERQKGKNQYQKLGEKGEFLEVTEYNAHLWVNLTDYLDTGLFLDHRIARRMLGQMSKGKDFLNLFSYTGSATVHAGLGGARSTTTVDMSRTYLEWAERNLRLNGLTGRTHRLIQADCLAWLREANEQFDLIFIDPPTFSNSKRMEDAFDVQRDHLALMKDLKRLLRAGGTIMFSNNKRGFRMDLDGLAKLGLKAQEITQKTLSQDFARNRQIHNCWLITAA.

The THUMP domain occupies 43 to 154 (LVYQSLMWSR…KETASIALDL (112 aa)).

Belongs to the methyltransferase superfamily. RlmKL family.

Its subcellular location is the cytoplasm. It catalyses the reaction guanosine(2445) in 23S rRNA + S-adenosyl-L-methionine = N(2)-methylguanosine(2445) in 23S rRNA + S-adenosyl-L-homocysteine + H(+). It carries out the reaction guanosine(2069) in 23S rRNA + S-adenosyl-L-methionine = N(2)-methylguanosine(2069) in 23S rRNA + S-adenosyl-L-homocysteine + H(+). Specifically methylates the guanine in position 2445 (m2G2445) and the guanine in position 2069 (m7G2069) of 23S rRNA. In Shigella dysenteriae serotype 1 (strain Sd197), this protein is Ribosomal RNA large subunit methyltransferase K/L.